The following is a 299-amino-acid chain: Acetaldehyde dehydrogenase 6 (299 aa).

Cysteine 125 functions as the Acyl-thioester intermediate in the catalytic mechanism. Residues 156-164 (GAGPGTRAN) and asparagine 275 contribute to the NAD(+) site.

This sequence belongs to the acetaldehyde dehydrogenase family.

It catalyses the reaction acetaldehyde + NAD(+) + CoA = acetyl-CoA + NADH + H(+). The protein is Acetaldehyde dehydrogenase 6 (hpdG) of Rhodococcus jostii (strain RHA1).